The chain runs to 141 residues: Terrelysin (141 aa).

This sequence belongs to the aegerolysin family.

Its subcellular location is the cytoplasm. Functionally, hemolysins are potential virulence factors. Has hemolytic activity against sheep erythrocytes in vitro. The chain is Terrelysin from Aspergillus terreus (strain NIH 2624 / FGSC A1156).